The sequence spans 582 residues: Hydrazine dehydrogenase (582 aa).

The N-terminal stretch at 1–32 is a signal peptide; the sequence is MRKFLKVTLASALIGCGVIGTVSSLMVKEAKA. 32 residues coordinate heme c: C121, C124, H125, H141, C151, C154, H155, H159, C170, C175, H176, H191, C216, C219, H220, C227, C230, H231, H234, C247, C250, H251, H267, C297, C300, H301, H306, C342, C345, H346, H454, and Y462. The interval 561–582 is disordered; sequence GSHSAHHHESGHDPAARSMKEH. A compositionally biased stretch (basic and acidic residues) spans 567–582; that stretch reads HHESGHDPAARSMKEH.

In terms of assembly, homotrimer; subunits are linked by two covalent bonds between Tyr-462 of one subunit and heme P460 of an adjacent subunit. May form 24-mer of an octamer of trimers. The cofactor is heme c.

The protein localises to the anammoxosome. It catalyses the reaction hydrazine + 4 Fe(III)-[cytochrome c] = N2 + 4 Fe(II)-[cytochrome c] + 4 H(+). The protein operates within nitrogen metabolism. With respect to regulation, is strongly and competitively inhibited by NO and hydroxylamine. Functionally, catalyzes the four-electron oxidation of hydrazine to N2. The electrons derived from hydrazine oxidation may be transferred to the quinone pool and exploited to promote the generation of proton-motive force (pmf) across the anammoxosome membrane. Is involved in anaerobic ammonium oxidation (anammox), a biological process in which nitrite is used as the electron acceptor in the conversion of ammonium to dinitrogen gas (N2) and water; this bacterial process has a major role in the Earth's nitrogen cycle and has been estimated to synthesize up to 50% of the dinitrogen gas emitted into our atmosphere from the oceans. Cannot oxidize hydroxylamine to NO. The chain is Hydrazine dehydrogenase from Kuenenia stuttgartiensis.